A 155-amino-acid chain; its full sequence is S-ribosylhomocysteine lyase (155 aa).

Fe cation-binding residues include H57, H61, and C124.

It belongs to the LuxS family. Homodimer. Requires Fe cation as cofactor.

The enzyme catalyses S-(5-deoxy-D-ribos-5-yl)-L-homocysteine = (S)-4,5-dihydroxypentane-2,3-dione + L-homocysteine. In terms of biological role, involved in the synthesis of autoinducer 2 (AI-2) which is secreted by bacteria and is used to communicate both the cell density and the metabolic potential of the environment. The regulation of gene expression in response to changes in cell density is called quorum sensing. Catalyzes the transformation of S-ribosylhomocysteine (RHC) to homocysteine (HC) and 4,5-dihydroxy-2,3-pentadione (DPD). This Listeria monocytogenes serotype 4a (strain HCC23) protein is S-ribosylhomocysteine lyase.